Here is a 302-residue protein sequence, read N- to C-terminus: Protein FLOURY 1 (302 aa).

Helical transmembrane passes span 27–47 and 82–102; these read SAGA…VAVL and LAGS…FLAV. The interval 160 to 195 is disordered; sequence SSKPVSRSLAAEFDQEADGEEEDNAGETSDPDDGSV. A compositionally biased stretch (acidic residues) spans 172–192; sequence FDQEADGEEEDNAGETSDPDD. The 107-residue stretch at 193-299 folds into the GTD-binding domain; the sequence is GSVQYLRRRL…ALSETSEDDR (107 aa). Residues 199–254 adopt a coiled-coil conformation; it reads RRRLKEEMLLKEVALEELEKERHAAASAADEAMSKIACLRSEKALVEREARQFQEM. Residues 283–302 form a disordered region; the sequence is PEAITDRALSETSEDDRDKK.

In terms of assembly, interacts (via C-terminus) with both 22 kDa and 19 kDa alpha-zeins. Interacts (via C-terminus) with OP10 (via N-terminus). As to expression, expressed in endosperm. Not detected in embryo, leaves and roots.

Its subcellular location is the endoplasmic reticulum membrane. In terms of biological role, involved in protein body development and 22 kDa alpha-zein localization. The sequence is that of Protein FLOURY 1 from Zea mays (Maize).